The primary structure comprises 346 residues: 4-hydroxy-2-oxohexanoate aldolase (346 aa).

A Pyruvate carboxyltransferase domain is found at 7 to 259 (VRITDTSLRD…KTGIDFFDIA (253 aa)). Residue 15 to 16 (RD) coordinates substrate. Aspartate 16 contributes to the Mn(2+) binding site. Histidine 19 acts as the Proton acceptor in catalysis. Substrate-binding residues include serine 169 and histidine 198. Residues histidine 198 and histidine 200 each coordinate Mn(2+). A substrate-binding site is contributed by tyrosine 289.

Belongs to the 4-hydroxy-2-oxovalerate aldolase family. As to quaternary structure, homodimer. Forms a heterotetramer composed of two aldolase (HsaF) and two dehydrogenase (HsaG) subunits. Mn(2+) is required as a cofactor.

The enzyme catalyses (S)-4-hydroxy-2-oxohexanoate = propanal + pyruvate. It catalyses the reaction (S)-4-hydroxy-2-oxopentanoate = acetaldehyde + pyruvate. In terms of biological role, involved in cholesterol degradation. Catalyzes the retro-aldol cleavage of 4-hydroxy-2-oxohexanoate (HOHA) to pyruvate and propanal. Can also catalyze the cleavage of 4-hydroxy-2-oxopentanoate (HOPA) to pyruvate and acetaldehyde. The aldehydes produced by this reaction are directly channeled to the dehydrogenase HsaG. This is 4-hydroxy-2-oxohexanoate aldolase from Mycobacterium bovis (strain ATCC BAA-935 / AF2122/97).